The sequence spans 843 residues: Protein translocase subunit SecA 1 (843 aa).

ATP contacts are provided by residues glutamine 91, 109 to 113, and aspartate 498; that span reads GEGKT. Over residues 799 to 813 the composition is skewed to basic and acidic residues; sequence EAKHVSAEDGKEKVK. Residues 799–826 are disordered; that stretch reads EAKHVSAEDGKEKVKPKPIVKGDQVGRN. Zn(2+) contacts are provided by cysteine 829, cysteine 831, cysteine 840, and histidine 841.

The protein belongs to the SecA family. Monomer and homodimer. Part of the essential Sec protein translocation apparatus which comprises SecA, SecYEG and auxiliary proteins SecDF. Other proteins may also be involved. The cofactor is Zn(2+).

The protein resides in the cell membrane. The protein localises to the cytoplasm. The catalysed reaction is ATP + H2O + cellular proteinSide 1 = ADP + phosphate + cellular proteinSide 2.. Its function is as follows. Part of the Sec protein translocase complex. Interacts with the SecYEG preprotein conducting channel. Has a central role in coupling the hydrolysis of ATP to the transfer of proteins into and across the cell membrane, serving as an ATP-driven molecular motor driving the stepwise translocation of polypeptide chains across the membrane. This chain is Protein translocase subunit SecA 1, found in Staphylococcus aureus (strain MRSA252).